We begin with the raw amino-acid sequence, 55 residues long: Ribulose bisphosphate carboxylase large chain (55 aa).

The active-site Proton acceptor is H18. Residues R19 and H27 each contribute to the substrate site.

Belongs to the RuBisCO large chain family. Type I subfamily. Heterohexadecamer of 8 large chains and 8 small chains; disulfide-linked. The disulfide link is formed within the large subunit homodimers. Mg(2+) is required as a cofactor. Post-translationally, the disulfide bond which can form in the large chain dimeric partners within the hexadecamer appears to be associated with oxidative stress and protein turnover.

The protein localises to the plastid. It localises to the chloroplast. The enzyme catalyses 2 (2R)-3-phosphoglycerate + 2 H(+) = D-ribulose 1,5-bisphosphate + CO2 + H2O. It carries out the reaction D-ribulose 1,5-bisphosphate + O2 = 2-phosphoglycolate + (2R)-3-phosphoglycerate + 2 H(+). RuBisCO catalyzes two reactions: the carboxylation of D-ribulose 1,5-bisphosphate, the primary event in carbon dioxide fixation, as well as the oxidative fragmentation of the pentose substrate in the photorespiration process. Both reactions occur simultaneously and in competition at the same active site. In Vitis sp. (Grape), this protein is Ribulose bisphosphate carboxylase large chain.